Reading from the N-terminus, the 259-residue chain is uncharacterized protein (259 aa).

Belongs to the BtpA family.

This is an uncharacterized protein from Pyrococcus abyssi (strain GE5 / Orsay).